Reading from the N-terminus, the 171-residue chain is Myosin regulatory light polypeptide 9 (171 aa).

Residues 1-15 are compositionally biased toward basic residues; the sequence is MSSKRAKAKTTKKRP. The tract at residues 1 to 21 is disordered; it reads MSSKRAKAKTTKKRPQSATSN. S2 carries the post-translational modification N-acetylserine. A Phosphothreonine; by MLCK, CIT and ROCK2 modification is found at T19. Position 20 is a phosphoserine; by CDC42BP, CIT, MLCK, PAK1, ROCK1, ROCK2, DAPK1, DAPK2 and ZIPK/DAPK3 (S20). 2 consecutive EF-hand domains span residues 29 to 64 and 98 to 133; these read SQIQEFKEAFNMIDQNRDGFIDKEDLHDMLASLGKN and DPEDVIRNAFACFDEEASGFIHEDHLRELLTTMGDR. Residues D42, N44, D46, and D53 each coordinate Ca(2+).

In terms of assembly, myosin is a hexamer of 2 heavy chains and 4 light chains: interacts with myosin heavy chain MYO19. Interacts with LUZP1; the interaction results in inhibition of phosphorylation of MYL9 by DAPK3. Phosphorylation increases the actin-activated myosin ATPase activity and thereby regulates the contractile activity. It is required to generate the driving force in the migration of the cells but not necessary for localization of myosin-2 at the leading edge. Phosphorylation is required for myotube formation. Phosphorylated by DAPK3; DAPK3-mediated phosphorylation is inhibited by LUZP1. In terms of tissue distribution, smooth muscle tissues and in some, but not all, nonmuscle cells.

The protein resides in the cytoplasm. The protein localises to the cytoskeleton. Its subcellular location is the cell cortex. Its function is as follows. Myosin regulatory subunit that plays an important role in regulation of both smooth muscle and nonmuscle cell contractile activity via its phosphorylation. Implicated in cytokinesis, receptor capping, and cell locomotion. In myoblasts, may regulate PIEZO1-dependent cortical actomyosin assembly involved in myotube formation. The chain is Myosin regulatory light polypeptide 9 (Myl9) from Rattus norvegicus (Rat).